A 496-amino-acid polypeptide reads, in one-letter code: Probable cytosol aminopeptidase (496 aa).

Mn(2+) contacts are provided by Lys262 and Asp267. Lys274 is an active-site residue. Mn(2+) is bound by residues Asp285, Asp344, and Glu346. Residue Arg348 is part of the active site.

Belongs to the peptidase M17 family. It depends on Mn(2+) as a cofactor.

It is found in the cytoplasm. The enzyme catalyses Release of an N-terminal amino acid, Xaa-|-Yaa-, in which Xaa is preferably Leu, but may be other amino acids including Pro although not Arg or Lys, and Yaa may be Pro. Amino acid amides and methyl esters are also readily hydrolyzed, but rates on arylamides are exceedingly low.. It carries out the reaction Release of an N-terminal amino acid, preferentially leucine, but not glutamic or aspartic acids.. Functionally, presumably involved in the processing and regular turnover of intracellular proteins. Catalyzes the removal of unsubstituted N-terminal amino acids from various peptides. This chain is Probable cytosol aminopeptidase, found in Rhizobium leguminosarum bv. trifolii (strain WSM2304).